The chain runs to 236 residues: Urease accessory protein UreG (236 aa).

The interval 1 to 26 is disordered; it reads MHDHSLHSGHDHGLGPGSFHDRGAPH. 42–49 serves as a coordination point for GTP; that stretch reads GPVGSGKT.

It belongs to the SIMIBI class G3E GTPase family. UreG subfamily. In terms of assembly, homodimer. UreD, UreF and UreG form a complex that acts as a GTP-hydrolysis-dependent molecular chaperone, activating the urease apoprotein by helping to assemble the nickel containing metallocenter of UreC. The UreE protein probably delivers the nickel.

The protein resides in the cytoplasm. Its function is as follows. Facilitates the functional incorporation of the urease nickel metallocenter. This process requires GTP hydrolysis, probably effectuated by UreG. The protein is Urease accessory protein UreG of Anaeromyxobacter sp. (strain Fw109-5).